The chain runs to 77 residues: DNA-directed RNA polymerase subunit omega (77 aa).

It belongs to the RNA polymerase subunit omega family. As to quaternary structure, the RNAP catalytic core consists of 2 alpha, 1 beta, 1 beta' and 1 omega subunit. When a sigma factor is associated with the core the holoenzyme is formed, which can initiate transcription.

The enzyme catalyses RNA(n) + a ribonucleoside 5'-triphosphate = RNA(n+1) + diphosphate. In terms of biological role, promotes RNA polymerase assembly. Latches the N- and C-terminal regions of the beta' subunit thereby facilitating its interaction with the beta and alpha subunits. This chain is DNA-directed RNA polymerase subunit omega, found in Dichelobacter nodosus (strain VCS1703A).